The sequence spans 1412 residues: DNA-directed RNA polymerase subunit beta' (1412 aa).

Residues Cys71, Cys73, Cys86, and Cys89 each contribute to the Zn(2+) site. Mg(2+) is bound by residues Asp461, Asp463, and Asp465. Residues Cys815, Cys889, Cys896, and Cys899 each contribute to the Zn(2+) site.

Belongs to the RNA polymerase beta' chain family. In terms of assembly, the RNAP catalytic core consists of 2 alpha, 1 beta, 1 beta' and 1 omega subunit. When a sigma factor is associated with the core the holoenzyme is formed, which can initiate transcription. Mg(2+) is required as a cofactor. Requires Zn(2+) as cofactor.

The enzyme catalyses RNA(n) + a ribonucleoside 5'-triphosphate = RNA(n+1) + diphosphate. Functionally, DNA-dependent RNA polymerase catalyzes the transcription of DNA into RNA using the four ribonucleoside triphosphates as substrates. This chain is DNA-directed RNA polymerase subunit beta', found in Actinobacillus pleuropneumoniae serotype 5b (strain L20).